The primary structure comprises 217 residues: Eukaryotic translation initiation factor 4E (217 aa).

A disordered region spans residues 1–30; that stretch reads MATVEPETTPTPNPPTTEEEKTESNQEVAN. N-acetylalanine is present on Ala-2. A Phosphothreonine modification is found at Thr-22. The EIF4EBP1/2/3 binding stretch occupies residues 37-40; the sequence is HPLQ. Residue 56–57 coordinates mRNA; that stretch reads WQ. The interval 73–77 is EIF4EBP1/2/3 binding; that stretch reads WALYN. 102–103 contacts mRNA; that stretch reads WE. Residues 132–139 form an EIF4EBP1/2/3 binding region; that stretch reads ETLLCLIG. MRNA is bound by residues 157 to 162 and 205 to 207; these read RAKGDK and TKS. Ser-209 carries the post-translational modification Phosphoserine; by PKC and MKNK2.

Belongs to the eukaryotic initiation factor 4E family. As to quaternary structure, eIF4F is a multi-subunit complex, the composition of which varies with external and internal environmental conditions. It is composed of at least EIF4A, EIF4E and EIF4G1/EIF4G3. EIF4E is also known to interact with other partners. Interacts with EIF4ENIF1/4E-T; promotes recruitment to P-bodies and import into the nucleus. Hypophosphorylated EIF4EBP1, EIF4EBP2 and EIF4EBP3 compete with EIF4G1/EIF4G3 to interact with EIF4E; insulin stimulated MAP-kinase (MAPK1 and MAPK3) phosphorylation of EIF4EBP1 causes dissociation of the complex allowing EIF4G1/EIF4G3 to bind and consequent initiation of translation. Interacts mutually exclusive with EIF4A1 or EIF4A2. Interacts with NGDN and PIWIL2. Component of the CYFIP1-EIF4E-FMR1 complex composed of CYFIP, EIF4E and FMR1. Interacts directly with CYFIP1. Interacts with CLOCK. Binds to MKNK2 in nucleus. Interacts with LIMD1, WTIP and AJUBA. Interacts with APOBEC3G in an RNA-dependent manner. Interacts with LARP1. Interacts with METTL3. Interacts with RBM24; this interaction prevents EIF4E from binding to p53/TP53 mRNA and inhibits the assembly of translation initiation complex. Interacts with DDX3X; interaction is direct and in an RNA-independent manner; this interaction enhances EIF4E cap-binding ability and is required for the repression of cap-dependent translation and the increase of IRES-mediated translation. DDX3X competes with EIF4G1 for interaction with EIF4E. Interacts with EIF4G1; which in a mutual exclusive interaction associates either with EIF1 or with EIF4E on a common binding site. Interacts with BTG4 and CNOT7. Interacts with LRPPRC (via N-terminus); the interaction promotes association of EIF4E with 4ESE-containing mRNAs. Interacts with mRNA cleavage enzyme CPSF3 and its cofactor CPSF1. Interacts (via RING-type zinc finger) with PML; the interaction results in conformational changes of both interacting proteins and reduces EIF4E affinity for the 5' m7G cap of mRNA, thus reducing EIF4E-mediated mRNA nuclear export. Interacts with homeobox protein HHEX/PRH; the interaction inhibits EIF4E-mediated mRNA nuclear export. Interacts with homeobox protein HOXA9; the interaction positively regulates EIF4E-mediated mRNA nuclear export. Interacts with homeobox protein EMX2. (Microbial infection) Interacts with Lassa virus Z protein. In terms of assembly, (Microbial infection) Interacts with Lymphocytic choriomeningitis virus (LCMV) Z protein (via RING-type zinc finger); the interaction results in conformational changes of both interacting proteins and reduces EIF4E affinity for the m7G mRNA cap structure. As to quaternary structure, (Microbial infection) Interacts (via cap-binding region) with potato virus Y VPg; this interaction mediates the translation of the VPg-viral RNA conjugates and interferes with the cellular EIF4E-dependent mRNA export and translation. In terms of processing, phosphorylation increases the ability of the protein to bind to mRNA caps and to form the eIF4F complex. Phosphorylation also enhances its mRNA transport function. Phosphorylation at Ser-209 is not essential for protein synthesis.

Its subcellular location is the cytoplasm. The protein localises to the P-body. It localises to the stress granule. The protein resides in the nucleus. It is found in the nucleus speckle. Its subcellular location is the nuclear body. Functionally, acts in the cytoplasm to initiate and regulate protein synthesis and is required in the nucleus for export of a subset of mRNAs from the nucleus to the cytoplasm which promotes processes such as RNA capping, processing and splicing. Component of the protein complex eIF4F, which is involved in the recognition of the mRNA cap, ATP-dependent unwinding of 5'-terminal secondary structure and recruitment of mRNA to the ribosome. This protein recognizes and binds the 7-methylguanosine (m7G)-containing mRNA cap during an early step in the initiation of protein synthesis and facilitates ribosome binding by inducing the unwinding of the mRNAs secondary structures. Together with EIF4G1, antagonizes the scanning promoted by EIF1-EIF4G1 and is required for TISU translation, a process where the TISU element recognition makes scanning unnecessary. In addition to its role in translation initiation, also acts as a regulator of translation and stability in the cytoplasm. Component of the CYFIP1-EIF4E-FMR1 complex which binds to the mRNA cap and mediates translational repression: in the complex, EIF4E mediates the binding to the mRNA cap. Component of a multiprotein complex that sequesters and represses translation of proneurogenic factors during neurogenesis. In P-bodies, component of a complex that mediates the storage of translationally inactive mRNAs in the cytoplasm and prevents their degradation. May play an important role in spermatogenesis through translational regulation of stage-specific mRNAs during germ cell development. As well as its roles in translation, also involved in mRNA nucleocytoplasmic transport. Its role in mRNA export from the nucleus to the cytoplasm relies on its ability to bind the m7G cap of RNAs and on the presence of the 50-nucleotide EIF4E sensitivity element (4ESE) in the 3'UTR of sensitive transcripts. Interaction with the 4ESE is mediated by LRPPRC which binds simultaneously to both EIF4E and the 4ESE, thereby acting as a platform for assembly for the RNA export complex. EIF4E-dependent mRNA export is independent of ongoing protein or RNA synthesis and is also NFX1-independent but is XPO1-dependent with LRPPRC interacting with XPO1 to form an EIF4E-dependent mRNA export complex. Alters the composition of the cytoplasmic face of the nuclear pore to promote RNA export by reducing RANBP2 expression, relocalizing nucleoporin NUP214 and increasing expression of RANBP1 and RNA export factors DDX19 and GLE1. Promotes the nuclear export of cyclin CCND1 mRNA. Promotes the nuclear export of NOS2/iNOS mRNA. Promotes the nuclear export of MDM2 mRNA. Promotes the export of additional mRNAs, including others involved in the cell cycle. In the nucleus, binds to capped splice factor-encoding mRNAs and stimulates their nuclear export to enhance splice factor production by increasing their cytoplasmic availability to the translation machinery. May also regulate splicing through interaction with the spliceosome in an RNA and m7G cap-dependent manner. Also binds to some pre-mRNAs and may play a role in their recruitment to the spliceosome. Promotes steady-state capping of a subset of coding and non-coding RNAs by mediating nuclear export of capping machinery mRNAs including RNMT, RNGTT and RAMAC to enhance their translation. Stimulates mRNA 3'-end processing by promoting the expression of several core cleavage complex factors required for mRNA cleavage and polyadenylation, and may also have a direct effect through its interaction with the CPSF3 cleavage enzyme. Rescues cells from apoptosis by promoting activation of serine/threonine-protein kinase AKT1 through mRNA export of NBS1 which potentiates AKT1 phosphorylation and also through mRNA export of AKT1 effectors, allowing for increased production of these proteins. The sequence is that of Eukaryotic translation initiation factor 4E from Homo sapiens (Human).